Here is a 234-residue protein sequence, read N- to C-terminus: Large ribosomal subunit protein uL1 (234 aa).

It belongs to the universal ribosomal protein uL1 family. In terms of assembly, part of the 50S ribosomal subunit.

In terms of biological role, binds directly to 23S rRNA. The L1 stalk is quite mobile in the ribosome, and is involved in E site tRNA release. Its function is as follows. Protein L1 is also a translational repressor protein, it controls the translation of the L11 operon by binding to its mRNA. The chain is Large ribosomal subunit protein uL1 from Cronobacter sakazakii (strain ATCC BAA-894) (Enterobacter sakazakii).